The primary structure comprises 262 residues: ATP synthase subunit a 1 (262 aa).

The next 5 membrane-spanning stretches (helical) occupy residues 30–50 (TVHIDSLFFSVLTGLAFILVF), 91–111 (IAPLGLTIFCWIMLMNIMDLI), 131–151 (IVPTADVNITMAMALGVFALM), 201–221 (LFGNMFAGEVVFILIAALMPW), and 232–252 (AIFHILIITIQAFVFMMLTIV).

Belongs to the ATPase A chain family. In terms of assembly, F-type ATPases have 2 components, CF(1) - the catalytic core - and CF(0) - the membrane proton channel. CF(1) has five subunits: alpha(3), beta(3), gamma(1), delta(1), epsilon(1). CF(0) has three main subunits: a(1), b(2) and c(9-12). The alpha and beta chains form an alternating ring which encloses part of the gamma chain. CF(1) is attached to CF(0) by a central stalk formed by the gamma and epsilon chains, while a peripheral stalk is formed by the delta and b chains.

The protein localises to the cell inner membrane. Functionally, key component of the proton channel; it plays a direct role in the translocation of protons across the membrane. The chain is ATP synthase subunit a 1 from Photobacterium profundum (strain SS9).